A 198-amino-acid polypeptide reads, in one-letter code: Na(+)-translocating NADH-quinone reductase subunit E (198 aa).

A run of 6 helical transmembrane segments spans residues 11-31 (SVFI…FLAV), 35-55 (VSTA…AVPV), 77-97 (FLNF…LEMI), 110-130 (GIFL…SFMV), 140-160 (VVYG…LAGL), and 176-196 (LGIT…FSGI).

Belongs to the NqrDE/RnfAE family. In terms of assembly, composed of six subunits; NqrA, NqrB, NqrC, NqrD, NqrE and NqrF.

It localises to the cell inner membrane. It carries out the reaction a ubiquinone + n Na(+)(in) + NADH + H(+) = a ubiquinol + n Na(+)(out) + NAD(+). NQR complex catalyzes the reduction of ubiquinone-1 to ubiquinol by two successive reactions, coupled with the transport of Na(+) ions from the cytoplasm to the periplasm. NqrA to NqrE are probably involved in the second step, the conversion of ubisemiquinone to ubiquinol. The chain is Na(+)-translocating NADH-quinone reductase subunit E from Haemophilus ducreyi (strain 35000HP / ATCC 700724).